Here is a 108-residue protein sequence, read N- to C-terminus: Nucleoid-associated protein ACP_0492 (108 aa).

Belongs to the YbaB/EbfC family. In terms of assembly, homodimer.

The protein resides in the cytoplasm. It localises to the nucleoid. Binds to DNA and alters its conformation. May be involved in regulation of gene expression, nucleoid organization and DNA protection. The protein is Nucleoid-associated protein ACP_0492 of Acidobacterium capsulatum (strain ATCC 51196 / DSM 11244 / BCRC 80197 / JCM 7670 / NBRC 15755 / NCIMB 13165 / 161).